Consider the following 452-residue polypeptide: Probable 1,4-beta-D-glucan cellobiohydrolase A (452 aa).

The first 17 residues, 1 to 17, serve as a signal peptide directing secretion; that stretch reads MHQRALLFSALAVAANA. Residue Asn-81 is glycosylated (N-linked (GlcNAc...) asparagine). The active-site Nucleophile is Glu-226. The active-site Proton donor is Glu-231. Asn-284 is a glycosylation site (N-linked (GlcNAc...) asparagine). Residues 406-432 are disordered; it reads DPSKPGVARGTCEHGAGDPEKVESQHP. A compositionally biased stretch (basic and acidic residues) spans 416–431; sequence TCEHGAGDPEKVESQH.

This sequence belongs to the glycosyl hydrolase 7 (cellulase C) family.

The protein resides in the secreted. It carries out the reaction Hydrolysis of (1-&gt;4)-beta-D-glucosidic linkages in cellulose and cellotetraose, releasing cellobiose from the non-reducing ends of the chains.. In terms of biological role, the biological conversion of cellulose to glucose generally requires three types of hydrolytic enzymes: (1) Endoglucanases which cut internal beta-1,4-glucosidic bonds; (2) Exocellobiohydrolases that cut the disaccharide cellobiose from the non-reducing end of the cellulose polymer chain; (3) Beta-1,4-glucosidases which hydrolyze the cellobiose and other short cello-oligosaccharides to glucose. The chain is Probable 1,4-beta-D-glucan cellobiohydrolase A (cbhA) from Neosartorya fischeri (strain ATCC 1020 / DSM 3700 / CBS 544.65 / FGSC A1164 / JCM 1740 / NRRL 181 / WB 181) (Aspergillus fischerianus).